Here is a 483-residue protein sequence, read N- to C-terminus: 6-phosphogluconate dehydrogenase, decarboxylating 1 (483 aa).

Residues 11–16, 34–36, 78–80, and asparagine 106 contribute to the NADP(+) site; these read GLAVMG, NRT, and VKA. Residues asparagine 106 and 132–134 contribute to the substrate site; that span reads SGG. Lysine 186 functions as the Proton acceptor in the catalytic mechanism. 189–190 lines the substrate pocket; that stretch reads HN. The Proton donor role is filled by glutamate 193. Positions 194, 264, 291, 454, and 460 each coordinate substrate.

Belongs to the 6-phosphogluconate dehydrogenase family. As to quaternary structure, homodimer.

Its subcellular location is the cytoplasm. It carries out the reaction 6-phospho-D-gluconate + NADP(+) = D-ribulose 5-phosphate + CO2 + NADPH. It participates in carbohydrate degradation; pentose phosphate pathway; D-ribulose 5-phosphate from D-glucose 6-phosphate (oxidative stage): step 3/3. In terms of biological role, catalyzes the oxidative decarboxylation of 6-phosphogluconate to ribulose 5-phosphate and CO(2), with concomitant reduction of NADP to NADPH. This chain is 6-phosphogluconate dehydrogenase, decarboxylating 1 (pgdC), found in Spinacia oleracea (Spinach).